A 263-amino-acid polypeptide reads, in one-letter code: Acetylglutamate kinase (263 aa).

Substrate is bound by residues 48–49 (GG), R70, and N162.

Belongs to the acetylglutamate kinase family. ArgB subfamily.

The protein localises to the cytoplasm. It carries out the reaction N-acetyl-L-glutamate + ATP = N-acetyl-L-glutamyl 5-phosphate + ADP. It participates in amino-acid biosynthesis; L-arginine biosynthesis; N(2)-acetyl-L-ornithine from L-glutamate: step 2/4. Functionally, catalyzes the ATP-dependent phosphorylation of N-acetyl-L-glutamate. This chain is Acetylglutamate kinase, found in Vibrio vulnificus (strain YJ016).